A 1207-amino-acid polypeptide reads, in one-letter code: Glycerotoxin paralog 1 (1207 aa).

The EGF-like domain maps to 79-120 (DLNECNRNNGGCTNGKCINTEGSYHCDCDRGYLATSSRTKCE). 5 cysteine pairs are disulfide-bonded: Cys-83/Cys-95, Cys-90/Cys-104, Cys-106/Cys-119, Cys-124/Cys-167, and Cys-151/Cys-185. A Sushi domain is found at 122 to 187 (VECEPLTLAN…WSGTSPTCQN (66 aa)). WSC domains lie at 300–391 (VGTS…YRDR) and 392–476 (SLGF…NDQG). A glycan (N-linked (GlcNAc...) asparagine) is linked at Asn-745.

In terms of assembly, dimer; probably disulfide-linked. Interacts with Cav2.2/CACNA1B calcium channel. As to expression, expressed exclusively in the four pharyngeal lobes and in tissue located at the base of the teeth. No distinct expression is visible in the putative venom glands or elsewhere in the pharynx.

It localises to the secreted. Potent venom presynaptic neurotoxin that promotes a long-lasting increase in spontaneous neurotransmitter release at the peripheral and central synapses by selective activation of Cav2.2/CACNA1B (N-type) channels. In addition, it drastically enhances synaptic-vesicle recycling, an effect that is prevented by the Cav2.2-specific inhibitor conotoxin-MVIIA. It activates Cav2.2/CACNA1B by shifting the current-voltage relationship of channels towards more hyperpolarized potentiels in a reversible manner. May have two separate sites of action on Cav2.2: one high affinity linked to changes in gating properties, and a second low affinity that results in block of current activity. The chain is Glycerotoxin paralog 1 from Glycera tridactyla (Glycerine worm).